An 805-amino-acid chain; its full sequence is FAD-dependent monooxygenase verC1 (805 aa).

Residues 1–20 form the signal peptide; sequence MTFRVIIVGGGVAGLTLASA. FAD-binding residues include glutamate 32, alanine 46, and arginine 107. N-linked (GlcNAc...) asparagine glycosylation is present at asparagine 132. Tyrosine 214 is a catalytic residue. Residues aspartate 306 and alanine 319 each coordinate FAD. Transmembrane regions (helical) follow at residues 551 to 571, 604 to 624, 632 to 652, 671 to 691, 703 to 723, 726 to 746, and 761 to 781; these read ALTM…AGLG, IAVL…AFFW, SWLF…YLFS, LPVI…FWMW, VFFP…VCAI, WDML…IWDL, and IYGV…LGWL.

It belongs to the paxM FAD-dependent monooxygenase family.

The protein localises to the membrane. It participates in secondary metabolite biosynthesis; terpenoid biosynthesis. The protein operates within mycotoxin biosynthesis. FAD-dependent monooxygenase; part of the gene cluster that mediates the biosynthesis of the neurotoxin verrucosidin, a methylated alpha-pyrone polyketide that inhibits oxidative phosphorylation in mitochondria and thereby causes neurological diseases. The carbon backbone of verrucosidin is synthesized by the HR-PKS verA, and further modified by the other verrucodidin cluster enzymes. The chain is FAD-dependent monooxygenase verC1 from Penicillium polonicum.